Reading from the N-terminus, the 401-residue chain is (1R,4R,5S)-(-)-guaia-6,10(14)-diene synthase (401 aa).

2 residues coordinate Mg(2+): aspartate 134 and glutamate 139. The DDXXD motif motif lies at 134-138 (DDQFD). Arginine 242 is a substrate binding site. The Mg(2+) site is built by asparagine 288 and serine 292. Lysine 295 is a binding site for substrate. Residue aspartate 296 coordinates Mg(2+). 375 to 376 (RY) contacts substrate.

Belongs to the terpene synthase family. Mg(2+) is required as a cofactor.

It carries out the reaction (2E,6E)-farnesyl diphosphate = (1R,4R,5S)-(-)-guaia-6,10(14)-diene + diphosphate. It functions in the pathway secondary metabolite biosynthesis; terpenoid biosynthesis. Its function is as follows. Catalyzes the conversion of (2E,6E)-farnesyl diphosphate (FPP) to yield the bicyclic sesquiterpene guaia-6,10(14)-diene via a 1,10-cyclization, which requires the abstraction of the pyrophosphate from FPP to yield the (E,E)-germacradienyl cation. The only accepted substrate is farnesyl diphosphate (FPP). This Fusarium mangiferae (Mango malformation disease fungus) protein is (1R,4R,5S)-(-)-guaia-6,10(14)-diene synthase.